The sequence spans 571 residues: Arginine--tRNA ligase (571 aa).

The short motif at 122 to 132 (PNIAKEMHVGH) is the 'HIGH' region element.

The protein belongs to the class-I aminoacyl-tRNA synthetase family. As to quaternary structure, monomer.

The protein localises to the cytoplasm. It catalyses the reaction tRNA(Arg) + L-arginine + ATP = L-arginyl-tRNA(Arg) + AMP + diphosphate. This chain is Arginine--tRNA ligase, found in Buchnera aphidicola subsp. Cinara cedri (strain Cc).